Reading from the N-terminus, the 212-residue chain is MEAQYQSTNFLLQKVQHDLGRLEGTQNEQDAQVVVQSIYGDISTLKDNLQALDNYVSREQPARRQAARMRVDQLRMDVQRVDMAVSAVHTRMTQRWRSASEREELLSARYRPNDTALSIGDHELQLNDRLHSSHNRLDELISQGSAVLDNLKSQHFSLRGVSRKMHDIGQALGLSNSTLQVIDRRVREDWIFVIGCIVCCIFMYAFYRFWRG.

Over 1-189 the chain is Cytoplasmic; the sequence is MEAQYQSTNF…QVIDRRVRED (189 aa). Residues 190–210 traverse the membrane as a helical; Anchor for type IV membrane protein segment; it reads WIFVIGCIVCCIFMYAFYRFW. The Vesicular segment spans residues 211-212; the sequence is RG.

The protein belongs to the GOSR2 family. As to quaternary structure, part of a unique SNARE complex.

The protein resides in the golgi apparatus. It localises to the cis-Golgi network membrane. It is found in the golgi apparatus membrane. Its subcellular location is the endoplasmic reticulum membrane. In terms of biological role, involved in transport of proteins from the cis/medial-Golgi to the trans-Golgi network. The protein is Golgi SNAP receptor complex member 2 homolog memb-1 of Caenorhabditis briggsae.